Here is a 92-residue protein sequence, read N- to C-terminus: Acylphosphatase (92 aa).

In terms of domain architecture, Acylphosphatase-like spans 5 to 92 (RVKVKVNGRV…GVFERFEVRF (88 aa)). Active-site residues include Arg20 and Asn38.

It belongs to the acylphosphatase family.

The catalysed reaction is an acyl phosphate + H2O = a carboxylate + phosphate + H(+). The protein is Acylphosphatase (acyP) of Syntrophotalea carbinolica (strain DSM 2380 / NBRC 103641 / GraBd1) (Pelobacter carbinolicus).